Here is a 161-residue protein sequence, read N- to C-terminus: V-type proton ATPase subunit c (161 aa).

The Lumenal segment spans residues 1–9 (MSTDLCPVY). A helical transmembrane segment spans residues 10–32 (APFFGVMGCTAAIVFASFGAAYG). Residues 33-54 (TAKAGVGISAMGVLRPDLIVKN) are Cytoplasmic-facing. A helical transmembrane segment spans residues 55–75 (TIPVVMAGIIAIYGLVVSVLI). The Lumenal segment spans residues 76–91 (SGNLKQILSLYSGFIQ). Residues 92–113 (LGAGLSVGLAGLAAGFAIGIVG) traverse the membrane as a helical segment. Residues 114-125 (DAGVRGTAQQPR) are Cytoplasmic-facing. A helical membrane pass occupies residues 126 to 151 (LFVAMILILIFAEVLGLYGLIVALLL). Topologically, residues 152-161 (NTRATDNVTC) are lumenal.

The protein belongs to the V-ATPase proteolipid subunit family. As to quaternary structure, V-ATPase is a heteromultimeric enzyme composed of a peripheral catalytic V1 complex (components A to H) attached to an integral membrane V0 proton pore complex (components: a, c, c', c'', d, e, f and VOA1). The decameric c-ring forms the proton-conducting pore, and is composed of eight proteolipid subunits c, one subunit c' and one subunit c''.

It is found in the vacuole membrane. Proton-conducting pore forming subunit of the V0 complex of vacuolar(H+)-ATPase (V-ATPase), a multisubunit enzyme composed of a peripheral complex (V1) that hydrolyzes ATP and a membrane integral complex (V0) that translocates protons. V-ATPase is responsible for acidifying and maintaining the pH of intracellular compartments. This is V-type proton ATPase subunit c from Schizosaccharomyces pombe (strain 972 / ATCC 24843) (Fission yeast).